A 238-amino-acid chain; its full sequence is tRNA (guanine-N(7)-)-methyltransferase (238 aa).

Positions 68, 93, 120, and 143 each coordinate S-adenosyl-L-methionine. D143 is a catalytic residue. Residues K147, D179, and 216 to 219 (TKFE) each bind substrate.

It belongs to the class I-like SAM-binding methyltransferase superfamily. TrmB family.

It carries out the reaction guanosine(46) in tRNA + S-adenosyl-L-methionine = N(7)-methylguanosine(46) in tRNA + S-adenosyl-L-homocysteine. It participates in tRNA modification; N(7)-methylguanine-tRNA biosynthesis. Catalyzes the formation of N(7)-methylguanine at position 46 (m7G46) in tRNA. The chain is tRNA (guanine-N(7)-)-methyltransferase from Shewanella baltica (strain OS195).